The sequence spans 1019 residues: Vacuolar membrane protease (1019 aa).

Residues 1-69 (MFLEINFYST…DRIPTVVGFR (69 aa)) are Cytoplasmic-facing. A helical transmembrane segment spans residues 70 to 90 (VIPTTVLVLLTYLTIFTLVIV). Topologically, residues 91–404 (TDWLPEPPKN…AELVIFYLND (314 aa)) are vacuolar. The N-linked (GlcNAc...) asparagine glycan is linked to Asn158. Residues His195 and Asp207 each contribute to the Zn(2+) site. The active-site Proton acceptor is the Glu239. Residue Glu240 coordinates Zn(2+). An N-linked (GlcNAc...) asparagine glycan is attached at Asn256. Positions 265 and 341 each coordinate Zn(2+). The chain crosses the membrane as a helical span at residues 405–425 (LLIYNVVSLVVGPISLIFFVV). Topologically, residues 426–466 (CEYVLRNERARQPNGHPVSRPSVLEWLKQRSWLRALWRRSK) are cytoplasmic. The chain crosses the membrane as a helical span at residues 467-487 (FWIALVITIALQALLVWGYLA). The Vacuolar portion of the chain corresponds to 488 to 497 (FNSFTVYSSP). The helical transmembrane segment at 498–518 (YLVLISFFSLAYLSLVIPLTF) threads the bilayer. Residues 519–539 (TFNQTQSPTAKYIAPEREKHT) lie on the Cytoplasmic side of the membrane. Residues 540–560 (LLIQVYIFTWILLLFSTIAVA) traverse the membrane as a helical segment. Topologically, residues 561–565 (RAQVG) are vacuolar. A helical transmembrane segment spans residues 566–586 (GLYFVTAWNTGVWIACLLAAV). The Cytoplasmic segment spans residues 587–651 (EGMMLPVPQG…ASLRKPQEGG (65 aa)). A disordered region spans residues 603 to 634 (HSAHHHHHHEHEEDQDADDDDREQRQPPTEAT). The chain crosses the membrane as a helical span at residues 652-672 (VVGWWIVHLLLTIPAPVLLIA). Topologically, residues 673 to 692 (QMGSLLLDSLPQTLADGSPA) are vacuolar. Residues 693–713 (YVVYAAASLTAVLLAVPLTPF) form a helical membrane-spanning segment. Residues 714 to 719 (SGKLHR) are Cytoplasmic-facing. Residues 720–740 (GLFFLFFLSFLIVTAYLWLAF) traverse the membrane as a helical segment. Topologically, residues 741–1019 (PFSSADPLKV…LVEAWSPFSV (279 aa)) are vacuolar. Residue Asn774 is glycosylated (N-linked (GlcNAc...) asparagine).

This sequence belongs to the peptidase M28 family. The cofactor is Zn(2+).

Its subcellular location is the vacuole membrane. Its function is as follows. May be involved in vacuolar sorting and osmoregulation. The polypeptide is Vacuolar membrane protease (Laccaria bicolor (strain S238N-H82 / ATCC MYA-4686) (Bicoloured deceiver)).